A 1131-amino-acid chain; its full sequence is Protein DWARF 53 (1131 aa).

Positions 8 to 181 constitute a Clp R domain; that stretch reads ARQCLSPAAV…KLAILRPAPP (174 aa). Repeat stretches follow at residues 12–85 and 103–181; these read LSPA…LDRL and VSNS…PAPP. A disordered region spans residues 511–574; sequence NRDPYKPFPR…ISSPSVTNKR (64 aa). Over residues 558–569 the composition is skewed to low complexity; that stretch reads SSSTARPISSPS. An EAR 1 motif is present at residues 578–582; sequence LVLNL. Residues 588–655 form a disordered region; the sequence is KSDENLQERG…KRVEDSERSV (68 aa). Polar residues predominate over residues 597 to 609; it reads GMQSQHGTLSNVD. Residues 646–655 are compositionally biased toward basic and acidic residues; the sequence is KRVEDSERSV. An EAR 2 motif is present at residues 799–803; that stretch reads LDLNL. Disordered stretches follow at residues 951-970 and 976-1002; these read ISDDQEKLQESPSSSKRLHR and FDLNLPVDEDEPLDADDDSSSHENSYG. An EAR 3 motif is present at residues 976–981; that stretch reads FDLNLP. Positions 982–993 are enriched in acidic residues; sequence VDEDEPLDADDD.

Belongs to the ClpA/ClpB family. Interacts with D3. Interacts with D14. The interaction with D14 is enhanced in the presence of strigolactones. The interaction with D14 occurs in the presence of (2'R) stereoisomers of strigolactones, but not (2'S) stereoisomers. Interacts with the TOPLESS-related proteins TPR1, TPR2 and TPR3. Interacts with SPL14/IPA1. Polyubiquitinated. Strigolactone, but not karrikin, triggers rapid SCF(D3)-dependent degradation via the proteasome. Expressed in the shoot bases of seedlings, young leaves, axillary buds and young panicles. Expressed in young roots vasculature, culms, internodes and nodes, preferentially in the parenchyma cells surrounding the xylem.

Its subcellular location is the nucleus. Its function is as follows. Repressor of strigolactones (SL) signaling. Subjected to a negative feedback control of SL signaling. Suppresses the transcriptional activation activity of SPL14/IPA1 in SL signaling. Acts with SPL14/IPA1 to mediate the SL-regulated tiller development. Subject to a negative feedback regulation by SPL14/IPA1, which binds to D53 promoter to repress D53 gene expression. The chain is Protein DWARF 53 from Oryza sativa subsp. japonica (Rice).